Here is a 545-residue protein sequence, read N- to C-terminus: Chaperonin GroEL (545 aa).

ATP is bound by residues 29 to 32 (TMGP), K50, 86 to 90 (DGTTT), G414, 477 to 479 (DAA), and D493.

This sequence belongs to the chaperonin (HSP60) family. Forms a cylinder of 14 subunits composed of two heptameric rings stacked back-to-back. Interacts with the co-chaperonin GroES.

The protein resides in the cytoplasm. It catalyses the reaction ATP + H2O + a folded polypeptide = ADP + phosphate + an unfolded polypeptide.. Its function is as follows. Together with its co-chaperonin GroES, plays an essential role in assisting protein folding. The GroEL-GroES system forms a nano-cage that allows encapsulation of the non-native substrate proteins and provides a physical environment optimized to promote and accelerate protein folding. The protein is Chaperonin GroEL of Campylobacter jejuni subsp. jejuni serotype O:2 (strain ATCC 700819 / NCTC 11168).